Here is a 320-residue protein sequence, read N- to C-terminus: Methenyltetrahydromethanopterin cyclohydrolase (320 aa).

The protein belongs to the MCH family. In terms of assembly, homodimer.

The protein localises to the cytoplasm. It catalyses the reaction 5,10-methenyl-5,6,7,8-tetrahydromethanopterin + H2O = N(5)-formyl-5,6,7,8-tetrahydromethanopterin + H(+). Its pathway is one-carbon metabolism; methanogenesis from CO(2); 5,10-methenyl-5,6,7,8-tetrahydromethanopterin from CO(2): step 3/3. Its function is as follows. Catalyzes the reversible interconversion of 5-formyl-H(4)MPT to methenyl-H(4)MPT(+). The protein is Methenyltetrahydromethanopterin cyclohydrolase (mch) of Methanothermobacter marburgensis (strain ATCC BAA-927 / DSM 2133 / JCM 14651 / NBRC 100331 / OCM 82 / Marburg) (Methanobacterium thermoautotrophicum).